The sequence spans 466 residues: UDP-glycosyltransferase 91B1 (466 aa).

UDP-alpha-D-glucose is bound by residues T286, 342–344, 359–367, and 381–384; these read VPQ, HCGWGSAVE, and NLDQ.

It belongs to the UDP-glycosyltransferase family.

The chain is UDP-glycosyltransferase 91B1 (UGT91B1) from Arabidopsis thaliana (Mouse-ear cress).